The sequence spans 412 residues: Cellobiose 2-epimerase (412 aa).

Belongs to the cellobiose 2-epimerase family.

It carries out the reaction D-cellobiose = beta-D-glucosyl-(1-&gt;4)-D-mannopyranose. Catalyzes the reversible epimerization of cellobiose to 4-O-beta-D-glucopyranosyl-D-mannose (Glc-Man). Can also use lactose, epilactose, mannobiose and cellotriose. Highly specific for oligosaccharides linked by the beta-1,4-glycosidic linkage. Shows preference for lactose. The chain is Cellobiose 2-epimerase (ce) from Rhodothermus marinus (Rhodothermus obamensis).